A 1818-amino-acid chain; its full sequence is Nestin (1818 aa).

The coil 1B stretch occupies residues 1-14; it reads WREKLEAEVQRQNL. An IF rod domain is found at 1-135; that stretch reads WREKLEAEVQ…TLLEAENSRL (135 aa). The linker 2 stretch occupies residues 15-17; that stretch reads YQE. A coil 2B region spans residues 18–135; it reads RVAHMESSLG…TLLEAENSRL (118 aa). Position 133 is a phosphoserine (S133). The segment at 136–1818 is tail; the sequence is QTPGRSSQAS…DRDSWSSGED (1683 aa). A phosphothreonine mark is found at T137 and T160. S180 is modified (phosphoserine). Phosphothreonine is present on T210. Disordered stretches follow at residues 266–309, 336–355, 377–451, and 480–787; these read EEAG…GSSI, AQET…SQGP, HETP…SPEG, and AFKK…EEDQ. Position 288 is a phosphoserine (S288). The segment covering 292–303 has biased composition (basic and acidic residues); the sequence is PVLEAKDGDSTE. The segment covering 382 to 398 has biased composition (polar residues); that stretch reads KENCNSLRSVDENQGTL. S390 and S400 each carry phosphoserine. Composition is skewed to basic and acidic residues over residues 400–427 and 434–443; these read SPEE…EKGV and LGKEDPRIED. S448 carries the phosphoserine modification. Positions 495–508 are enriched in basic and acidic residues; that stretch reads EIQRVERLIEKEGQ. The residue at position 513 (S513) is a Phosphoserine. Basic and acidic residues-rich tracts occupy residues 521–536 and 565–586; these read TDRP…LKPV and TDRP…KEGQ. The residue at position 591 (S591) is a Phosphoserine. 3 stretches are compositionally biased toward basic and acidic residues: residues 599–614, 643–664, and 711–732; these read TDRP…LKPV and TDRP…KEGQ. S737 is modified (phosphoserine). A compositionally biased stretch (basic and acidic residues) spans 744 to 773; the sequence is ETYRLLEKENGEPLKPVEEEDQRVERLIEK. Residues S803 and S824 each carry the phosphoserine modification. Residues 866–900 are disordered; sequence ESLLKKGTQESLESHEDRNQETQDPQRFLEEEGQG. The segment covering 868–886 has biased composition (basic and acidic residues); the sequence is LLKKGTQESLESHEDRNQE. 2 positions are modified to phosphoserine: S915 and S957. The interval 945-998 is disordered; that stretch reads SLLERESQDSGKSLEGQEAFRCLGKEDPESLQFPEVQDQEIQRSLQQETQQTLG. Polar residues predominate over residues 986–997; sequence QRSLQQETQQTL. K1043 participates in a covalent cross-link: Glycyl lysine isopeptide (Lys-Gly) (interchain with G-Cter in SUMO1); alternate. A Glycyl lysine isopeptide (Lys-Gly) (interchain with G-Cter in SUMO2); alternate cross-link involves residue K1043. 7 positions are modified to phosphoserine: S1052, S1063, S1073, S1123, S1134, S1162, and S1238. Disordered stretches follow at residues 1134–1262 and 1334–1818; these read SPEA…LEGQ and HPSL…SGED. Basic and acidic residues-rich tracts occupy residues 1342–1361 and 1401–1416; these read VEAK…KEAG and ASDH…RPSE. Positions 1490-1505 are enriched in acidic residues; sequence QDWEESREESEADELG. Phosphoserine occurs at positions 1495, 1499, and 1523. Residues 1570 to 1579 are compositionally biased toward acidic residues; the sequence is LSSEEFEDLG. Phosphoserine occurs at positions 1614 and 1623. Over residues 1616–1636 the composition is skewed to acidic residues; the sequence is GFADEEESGEEGEEEEHEDGT. The segment covering 1686 to 1697 has biased composition (polar residues); the sequence is GLETESQDSAEP. 5 positions are modified to phosphoserine: S1698, S1700, S1791, S1814, and S1815. Over residues 1698 to 1708 the composition is skewed to low complexity; sequence SGSEVSESVSS.

The protein belongs to the intermediate filament family. Interacts with FHOD3. Forms homodimers and homotetramers in vitro. In mixtures with other intermediate filament proteins such as vimentin and alpha-internexin, preferentially forms heterodimers which can assemble to form intermediate filaments if nestin does not exceed 25%. Post-translationally, constitutively phosphorylated. This increases during mitosis when the cytoplasmic intermediate filament network is reorganized.

Functionally, required for brain and eye development. Promotes the disassembly of phosphorylated vimentin intermediate filaments (IF) during mitosis and may play a role in the trafficking and distribution of IF proteins and other cellular factors to daughter cells during progenitor cell division. Required for survival, renewal and mitogen-stimulated proliferation of neural progenitor cells. This is Nestin from Mesocricetus auratus (Golden hamster).